A 100-amino-acid chain; its full sequence is Small ribosomal subunit protein bS18c (100 aa).

Residues 81-100 (KQFERTESTPRTTGPRTRKK) are disordered. Over residues 89–100 (TPRTTGPRTRKK) the composition is skewed to low complexity.

Belongs to the bacterial ribosomal protein bS18 family. As to quaternary structure, part of the 30S ribosomal subunit.

The protein localises to the plastid. It is found in the chloroplast. In Nandina domestica (Heavenly bamboo), this protein is Small ribosomal subunit protein bS18c.